A 418-amino-acid chain; its full sequence is Protein fuzzy homolog (418 aa).

Belongs to the fuzzy family. Interacts with rsg1. Interacts with intu and wdpcp; fuz, intu and wdpcp probably form the core CPLANE (ciliogenesis and planar polarity effectors) complex.

It localises to the cytoplasm. Its subcellular location is the cytoskeleton. The protein resides in the cilium basal body. Probable planar cell polarity effector involved in cilium biogenesis. Proposed to function as core component of the CPLANE (ciliogenesis and planar polarity effectors) complex involved in the recruitment of peripheral IFT-A proteins to basal bodies. May regulate protein and membrane transport to the cilium. May control the organization of the apical actin cytoskeleton, which is essential for the normal orientation of elongating ciliary microtubules. This chain is Protein fuzzy homolog (fuz), found in Xenopus tropicalis (Western clawed frog).